A 417-amino-acid polypeptide reads, in one-letter code: NADH-quinone oxidoreductase subunit D (417 aa).

The protein belongs to the complex I 49 kDa subunit family. NDH-1 is composed of 14 different subunits. Subunits NuoB, C, D, E, F, and G constitute the peripheral sector of the complex.

Its subcellular location is the cell inner membrane. The catalysed reaction is a quinone + NADH + 5 H(+)(in) = a quinol + NAD(+) + 4 H(+)(out). NDH-1 shuttles electrons from NADH, via FMN and iron-sulfur (Fe-S) centers, to quinones in the respiratory chain. The immediate electron acceptor for the enzyme in this species is believed to be ubiquinone. Couples the redox reaction to proton translocation (for every two electrons transferred, four hydrogen ions are translocated across the cytoplasmic membrane), and thus conserves the redox energy in a proton gradient. The polypeptide is NADH-quinone oxidoreductase subunit D (Legionella pneumophila subsp. pneumophila (strain Philadelphia 1 / ATCC 33152 / DSM 7513)).